We begin with the raw amino-acid sequence, 331 residues long: Biotin synthase (331 aa).

Residues 39 to 264 (SELQTCYLVS…VFPQSMVRLA (226 aa)) enclose the Radical SAM core domain. [4Fe-4S] cluster-binding residues include Cys-54, Cys-58, and Cys-61. [2Fe-2S] cluster-binding residues include Cys-98, Cys-130, Cys-190, and Arg-262.

Belongs to the radical SAM superfamily. Biotin synthase family. Homodimer. [4Fe-4S] cluster is required as a cofactor. It depends on [2Fe-2S] cluster as a cofactor.

It carries out the reaction (4R,5S)-dethiobiotin + (sulfur carrier)-SH + 2 reduced [2Fe-2S]-[ferredoxin] + 2 S-adenosyl-L-methionine = (sulfur carrier)-H + biotin + 2 5'-deoxyadenosine + 2 L-methionine + 2 oxidized [2Fe-2S]-[ferredoxin]. The protein operates within cofactor biosynthesis; biotin biosynthesis; biotin from 7,8-diaminononanoate: step 2/2. Functionally, catalyzes the conversion of dethiobiotin (DTB) to biotin by the insertion of a sulfur atom into dethiobiotin via a radical-based mechanism. This chain is Biotin synthase, found in Chlamydia abortus (strain DSM 27085 / S26/3) (Chlamydophila abortus).